Consider the following 198-residue polypeptide: Armadillo repeat-containing protein 7 (198 aa).

ARM repeat units lie at residues glutamine 57–glycine 99 and valine 100–proline 140. Serine 169 is subject to Phosphoserine.

In terms of assembly, component of the minor spliceosome. Within this complex, interacts with RBM48.

In terms of biological role, as a component of the minor spliceosome, involved in the splicing of U12-type introns in pre-mRNAs. The sequence is that of Armadillo repeat-containing protein 7 (ARMC7) from Homo sapiens (Human).